Consider the following 191-residue polypeptide: Putative glutathione-dependent formaldehyde-activating enzyme (191 aa).

The region spanning 20 to 166 (FSGGTLRCHC…FKSVGLETYD (147 aa)) is the CENP-V/GFA domain. Zn(2+)-binding residues include C27, C29, C48, C50, C53, C95, and C98.

This sequence belongs to the Gfa family. The cofactor is Zn(2+).

The catalysed reaction is S-(hydroxymethyl)glutathione = glutathione + formaldehyde. Its pathway is one-carbon metabolism; formaldehyde degradation; formate from formaldehyde (glutathione route): step 1/3. Functionally, catalyzes the condensation of formaldehyde and glutathione to S-hydroxymethylglutathione. In Colletotrichum graminicola (strain M1.001 / M2 / FGSC 10212) (Maize anthracnose fungus), this protein is Putative glutathione-dependent formaldehyde-activating enzyme.